The following is a 553-amino-acid chain: MSLLVVAPEWLTSAAAELQSIESALSAANAAAAVPTTGLAAAAADEVSTAVATLFAGFGQEYQAISTQLSAFQQQFALTLNSSAGSYSAAEAQSVSILDTLGQDVFGAINAPTEALLGRPLIGNGANGTATSPNGGAGGLLFGNGGIGYSQTGAGIVGGAGGSAGLIGNGGAGGTGGAGATGGAGGNGGWLFGSGGIGGTGGANALGTGGTGGLGGSAGLFGGGGNGGAGGLGISGDLGTGGAGGTGGFLLGDYGVSGAGGDGRTVPLEVVNVTEPVVNVNVNGGHSTPVLIDTGSAGLVMQVKDVGGPLGLLRMGLPSGISMSAYSGGLTYLFATYPTTVDFGNGIVTSTTGVDVVLFSIPTSPYALTTWLNALWSNPLTTPFDAYFQSAGVDGVLGVGPNAVGPGPSIPTQALGGGLGQGLLIDMKGGELVFGPNPLTPEFSISGAPIATLWVSVNGGAPVAVPSIIDSGGVMGTIPSSVIGGSTLPANTNITVYTDNTMTTEVYHYSTNDYQPTVISSGLMNTGFLPFWNQPVYIDYSPAGTGTTVFDMP.

One can recognise a PE domain in the interval M1–A92. Residue D293 is part of the active site.

This sequence belongs to the mycobacterial PE family. PGRS subfamily. In terms of processing, undergoes auto-proteolytic processing.

It localises to the secreted. The protein resides in the cell surface. In terms of biological role, aspartic protease that processes the lipase LipY and other PE_PGRS proteins. Can also cleave itself. Cleaves LipY both inside the PE domain, before amino acid 98, and after amino acids 136 and 149. Involved in virulence. This is PE cleavage protein A from Mycobacterium marinum (strain ATCC BAA-535 / M).